We begin with the raw amino-acid sequence, 236 residues long: 7-cyano-7-deazaguanine synthase (236 aa).

7 to 17 (CSGGLDSVSLA) contacts ATP. Zn(2+)-binding residues include C185, C193, C196, and C199.

This sequence belongs to the QueC family. Requires Zn(2+) as cofactor.

The enzyme catalyses 7-carboxy-7-deazaguanine + NH4(+) + ATP = 7-cyano-7-deazaguanine + ADP + phosphate + H2O + H(+). It functions in the pathway purine metabolism; 7-cyano-7-deazaguanine biosynthesis. In terms of biological role, catalyzes the ATP-dependent conversion of 7-carboxy-7-deazaguanine (CDG) to 7-cyano-7-deazaguanine (preQ(0)). This Rhizobium meliloti (strain 1021) (Ensifer meliloti) protein is 7-cyano-7-deazaguanine synthase.